The sequence spans 214 residues: MTSSEPASPEIEQQANSAPRRPRILLAASGSVAAIKFGNLCHSFSEWAEVKAVATRASLHFIDRASLPKDVILYTEEDEWSTWNKVGDSVLHIELRSWADILVIAPLSANTLGKIAGGLCDNLLTCIVRAWDYSKPFFVAPAMNTLMWKNPFTEQHIMSIDELGVSLIPPVTKRLACGDYGNGAMAEPSVIYSTVRLFFESRVQQSGNIVQQPV.

FMN contacts are provided by residues 30–32 and 55–57; these read GSV and TRA. Residue H92 is the Proton donor of the active site. FMN contacts are provided by residues 108–111 and A142; that span reads SANT. N-[(R)-4-phosphopantothenoyl]-L-cysteine contacts are provided by N144, R174, and A176. The active-site Proton donor is the C177. M185 provides a ligand contact to N-[(R)-4-phosphopantothenoyl]-L-cysteine.

Belongs to the HFCD (homooligomeric flavin containing Cys decarboxylase) superfamily. As to quaternary structure, homotrimer. FMN is required as a cofactor. As to expression, mainly expressed in stems, to a lower extent in flowers, leaves and fruits, and at basal levels in roots.

It localises to the cell membrane. The protein resides in the cytoplasm. The enzyme catalyses N-[(R)-4-phosphopantothenoyl]-L-cysteine + H(+) = (R)-4'-phosphopantetheine + CO2. It functions in the pathway cofactor biosynthesis; coenzyme A biosynthesis; CoA from (R)-pantothenate: step 3/5. Its function is as follows. Involved in plant growth, and promotes salt and osmotic tolerance, probably via coenzyme A (CoA) accumulation and endogenous proline accumulation. Catalyzes the decarboxylation of 4'-phosphopantothenoylcysteine to 4'-phosphopantetheine, a key step in coenzyme A biosynthesis. Required for roots development. The sequence is that of Phosphopantothenoylcysteine decarboxylase HAL3 from Malus domestica (Apple).